Reading from the N-terminus, the 228-residue chain is Aspartate racemase (228 aa).

Substrate is bound at residue 47–49; it reads DRT. The active-site Proton donor/acceptor is cysteine 82. Substrate-binding positions include 83–85 and lysine 164; that span reads NTA. The active-site Proton donor/acceptor is the cysteine 194.

This sequence belongs to the aspartate/glutamate racemases family. In terms of assembly, homodimer. The existence of the interchain disulfide bond seen in the crystal structures is uncertain, but disulfide bonds have been reported for cytoplasmic proteins from thermophiles.

It catalyses the reaction L-aspartate = D-aspartate. With respect to regulation, weakly inhibited by citrate, but not by asparagine. The sequence is that of Aspartate racemase from Pyrococcus horikoshii (strain ATCC 700860 / DSM 12428 / JCM 9974 / NBRC 100139 / OT-3).